Here is a 184-residue protein sequence, read N- to C-terminus: Gastrokine-2 (184 aa).

The signal sequence occupies residues 1-20; sequence MKPLVAFLVVLSIFGIQSQA. A BRICHOS domain is found at 54-151; it reads HSGSCSSTTI…LCKHMPLYEG (98 aa). Cys81 and Cys143 form a disulfide bridge.

In terms of assembly, heterodimer with TFF1; disulfide linked. Interacts with TFF2. Stomach foveolar epithelium and duodenal Brunner's glands.

The protein resides in the secreted. Its subcellular location is the golgi apparatus. The protein is Gastrokine-2 (Gkn2) of Mus musculus (Mouse).